A 545-amino-acid chain; its full sequence is CTP synthase (545 aa).

Residues 1-265 (MSKYIFVTGG…DDLVVQNLGL (265 aa)) form an amidoligase domain region. CTP is bound at residue S13. A UTP-binding site is contributed by S13. Residues 14 to 19 (SLGKGA) and D71 each bind ATP. 2 residues coordinate Mg(2+): D71 and E139. Residues 146-148 (DIE), 186-191 (KTKPTQ), and K222 each bind CTP. UTP is bound by residues 186–191 (KTKPTQ) and K222. Residues 290–541 (VIALVGKYVG…MRAAIAQRER (252 aa)) enclose the Glutamine amidotransferase type-1 domain. Residue G351 coordinates L-glutamine. C378 (nucleophile; for glutamine hydrolysis) is an active-site residue. L-glutamine-binding positions include 379–382 (LGMQ), E402, and R469. Catalysis depends on residues H514 and E516.

This sequence belongs to the CTP synthase family. Homotetramer.

It carries out the reaction UTP + L-glutamine + ATP + H2O = CTP + L-glutamate + ADP + phosphate + 2 H(+). The catalysed reaction is L-glutamine + H2O = L-glutamate + NH4(+). It catalyses the reaction UTP + NH4(+) + ATP = CTP + ADP + phosphate + 2 H(+). It functions in the pathway pyrimidine metabolism; CTP biosynthesis via de novo pathway; CTP from UDP: step 2/2. Allosterically activated by GTP, when glutamine is the substrate; GTP has no effect on the reaction when ammonia is the substrate. The allosteric effector GTP functions by stabilizing the protein conformation that binds the tetrahedral intermediate(s) formed during glutamine hydrolysis. Inhibited by the product CTP, via allosteric rather than competitive inhibition. Functionally, catalyzes the ATP-dependent amination of UTP to CTP with either L-glutamine or ammonia as the source of nitrogen. Regulates intracellular CTP levels through interactions with the four ribonucleotide triphosphates. In Acidithiobacillus ferrooxidans (strain ATCC 23270 / DSM 14882 / CIP 104768 / NCIMB 8455) (Ferrobacillus ferrooxidans (strain ATCC 23270)), this protein is CTP synthase.